The sequence spans 552 residues: CTP synthase (552 aa).

Positions 1-265 (MTKFVFVTGG…DRIVCEKLAL (265 aa)) are amidoligase domain. Serine 13 contacts CTP. Serine 13 lines the UTP pocket. ATP-binding positions include 14 to 19 (SLGKGI) and aspartate 71. Residues aspartate 71 and glutamate 139 each contribute to the Mg(2+) site. Residues 146-148 (DIE), 186-191 (KTKPTQ), and lysine 222 contribute to the CTP site. Residues 186 to 191 (KTKPTQ) and lysine 222 each bind UTP. Residues 290–545 (TIGMVGKYVD…IKAALAHKQA (256 aa)) form the Glutamine amidotransferase type-1 domain. Glycine 351 is a binding site for L-glutamine. The active-site Nucleophile; for glutamine hydrolysis is cysteine 378. L-glutamine is bound by residues 379-382 (LGMQ), glutamate 402, and arginine 468. Residues histidine 518 and glutamate 520 contribute to the active site.

The protein belongs to the CTP synthase family. As to quaternary structure, homotetramer.

It carries out the reaction UTP + L-glutamine + ATP + H2O = CTP + L-glutamate + ADP + phosphate + 2 H(+). The enzyme catalyses L-glutamine + H2O = L-glutamate + NH4(+). It catalyses the reaction UTP + NH4(+) + ATP = CTP + ADP + phosphate + 2 H(+). It functions in the pathway pyrimidine metabolism; CTP biosynthesis via de novo pathway; CTP from UDP: step 2/2. With respect to regulation, allosterically activated by GTP, when glutamine is the substrate; GTP has no effect on the reaction when ammonia is the substrate. The allosteric effector GTP functions by stabilizing the protein conformation that binds the tetrahedral intermediate(s) formed during glutamine hydrolysis. Inhibited by the product CTP, via allosteric rather than competitive inhibition. In terms of biological role, catalyzes the ATP-dependent amination of UTP to CTP with either L-glutamine or ammonia as the source of nitrogen. Regulates intracellular CTP levels through interactions with the four ribonucleotide triphosphates. The sequence is that of CTP synthase from Herminiimonas arsenicoxydans.